The primary structure comprises 125 residues: Small ribosomal subunit protein uS13 (125 aa).

It belongs to the universal ribosomal protein uS13 family. Part of the 30S ribosomal subunit. Forms a loose heterodimer with protein S19. Forms two bridges to the 50S subunit in the 70S ribosome.

In terms of biological role, located at the top of the head of the 30S subunit, it contacts several helices of the 16S rRNA. In the 70S ribosome it contacts the 23S rRNA (bridge B1a) and protein L5 of the 50S subunit (bridge B1b), connecting the 2 subunits; these bridges are implicated in subunit movement. Contacts the tRNAs in the A and P-sites. The chain is Small ribosomal subunit protein uS13 from Rickettsia prowazekii (strain Madrid E).